A 446-amino-acid chain; its full sequence is Ubiquitin carboxyl-terminal hydrolase MINDY-3 (446 aa).

Cys-51 functions as the Nucleophile in the catalytic mechanism. Basic and acidic residues predominate over residues 117–128 (DNSDITDSHPEP). The disordered stretch occupies residues 117 to 137 (DNSDITDSHPEPESSQPTDTP). Catalysis depends on His-288, which acts as the Proton acceptor.

Belongs to the MINDY deubiquitinase family. FAM188 subfamily.

The protein resides in the nucleus. The enzyme catalyses Thiol-dependent hydrolysis of ester, thioester, amide, peptide and isopeptide bonds formed by the C-terminal Gly of ubiquitin (a 76-residue protein attached to proteins as an intracellular targeting signal).. Functionally, hydrolase that can remove 'Lys-48'-linked conjugated ubiquitin from proteins. This Danio rerio (Zebrafish) protein is Ubiquitin carboxyl-terminal hydrolase MINDY-3 (mindy3).